The sequence spans 902 residues: Protein NrfI (902 aa).

A run of 10 helical transmembrane segments spans residues 9–29, 75–95, 300–320, 335–355, 602–622, 659–679, 731–751, 772–792, 832–852, and 868–888; these read YITLTLLFLLLAVGAAIATFI, FLFHIAFVVILLGAGLTRYLG, VTYLGYALLFLGLLWNLLDPT, LSLLLPLCLLSPLASSLYAQS, LVLGFLVLLSAFGLLFFPPLA, DTYESMLYISWSGMLGALLFF, SYGFFGVGAFLGSFALALFIL, VSLILGLTLLVIGNFLGGIWA, YLFSLLSLWGFGSILMTYFGV, and LPIPLWVYALSLALALLSLIA.

In the C-terminal section; belongs to the CcmF/CycK/Ccl1/NrfE/CcsA family.

The protein resides in the cell membrane. Functionally, may play a role in cytochrome c biogenesis and may be required for maturation of the NrfA protein. The sequence is that of Protein NrfI (nrfI) from Wolinella succinogenes (strain ATCC 29543 / DSM 1740 / CCUG 13145 / JCM 31913 / LMG 7466 / NCTC 11488 / FDC 602W) (Vibrio succinogenes).